The following is a 134-amino-acid chain: Thrombin inhibitor savignin (134 aa).

A signal peptide spans 1–16 (MLFYVVITLVAGTVSG). One can recognise a BPTI/Kunitz inhibitor 1 domain in the interval 17–69 (LNVRCNNPHTANCENGAKLESYFREGETCVGSPACPGEGYATKEDCQKACFPG). Intrachain disulfides connect C21–C66, C29–C51, C45–C62, C81–C129, C89–C112, and C105–C125. Residues 70 to 82 (GGDHSTNVDSSCF) form a linker region. Residues 83–129 (GQPPTSCETGAEVTYYDSGSRTCKVLQHGCPSSENAFDSEIECQVAC) form the BPTI/Kunitz inhibitor domain.

Expressed in salivary glands.

Its subcellular location is the cytoplasmic vesicle. The protein localises to the secretory vesicle. It is found in the secreted. In terms of biological role, tick salivary thrombin inhibitor that plays an important part in the anti-hemostatic strategy of ticks. Inhibits thrombin-induced platelet aggregation, but has no effect on ADP- or collagen-induced aggregation. Is a competitive, slow-, tight-binding inhibitor of thrombin (Ki=4.89 pM). It requires thrombin fibrinogen-binding exosite for optimal inhibition, as its affinity for thrombin lacking the exosite is much lower (Ki=22.3 nM). Its N-terminal amino acid residues may bind inside the active site cleft of thrombin, while its C-terminal domain may interact with the basic fibrinogen recognition exosite of thrombin. It does not inhibit plasmin, factor Xa (F10), and trypsin. In Ornithodoros kalahariensis (Tick), this protein is Thrombin inhibitor savignin.